We begin with the raw amino-acid sequence, 520 residues long: Non-specific phospholipase C6 (520 aa).

The signal sequence occupies residues 1–31; it reads MKPSSASRFSLTFSHFLTLYCLLTQTHVAQG.

The protein belongs to the bacterial phospholipase C family. In terms of tissue distribution, expressed in roots, leaves, stems, flowers and siliques.

It localises to the secreted. In Arabidopsis thaliana (Mouse-ear cress), this protein is Non-specific phospholipase C6 (NPC6).